The sequence spans 952 residues: Ubiquitin carboxyl-terminal hydrolase CYLD (952 aa).

The segment at cysteine 106–glycine 589 is interaction with TRIP. CAP-Gly domains follow at residues leucine 153–alanine 198 and aspartate 253–cysteine 286. Residues arginine 311–glutamate 350 form a disordered region. Over residues glycine 327–arginine 346 the composition is skewed to polar residues. The residue at position 383 (serine 383) is a Phosphoserine. The tract at residues glutamate 386–glutamate 409 is disordered. The tract at residues aspartate 390 to glycine 465 is interaction with TRAF2. Phosphoserine occurs at positions 414 and 418. Residues leucine 466 to glutamate 680 are interaction with IKBKG/NEMO. A CAP-Gly 3 domain is found at glycine 488–lysine 531. The USP domain maps to lysine 588–proline 946. Cysteine 597 serves as the catalytic Nucleophile. The B-box stretch occupies residues leucine 777–histidine 829. Positions 784, 787, 795, 798, 813, 816, 821, and 829 each coordinate Zn(2+). The active-site Proton acceptor is histidine 867.

Belongs to the peptidase C19 family. In terms of assembly, interacts (via CAP-Gly domain) with IKBKG/NEMO (via proline-rich C-terminal region). Interacts with TRAF2 and TRIP. Interacts with PLK1, DVL1, DVL3, MAVS, TBK1, IKKE and RIGI. Interacts (via CAP-Gly domain) with microtubules. Interacts with HDAC6 and BCL3. Interacts with MAP3K7. Identified in a complex with TRAF6 and SQSTM1. Interacts with OPTN and SQSTM1. Interacts with CEP350. Interacts with RNF31; the interaction is indirect and is mediated via SPATA2. Interacts with SPATA2 (via the PUB domain); the interaction is direct and recruits CYLD to the LUBAC complex, thereby regulating TNF-alpha-induced necroptosis. In terms of processing, phosphorylated on several serine residues by IKKA and/or IKKB in response to immune stimuli. Phosphorylation requires IKBKG. Phosphorylation abolishes TRAF2 deubiquitination, interferes with the activation of Jun kinases, and strongly reduces CD40-dependent gene activation by NF-kappa-B. Ubiquitinated. Polyubiquitinated in hepatocytes treated with palmitic acid. Ubiquitination is mediated by E3 ligase TRIM47 and leads to proteasomal degradation.

It localises to the cytoplasm. Its subcellular location is the perinuclear region. The protein resides in the cytoskeleton. The protein localises to the cell membrane. It is found in the microtubule organizing center. It localises to the centrosome. Its subcellular location is the spindle. The protein resides in the cilium basal body. The enzyme catalyses Thiol-dependent hydrolysis of ester, thioester, amide, peptide and isopeptide bonds formed by the C-terminal Gly of ubiquitin (a 76-residue protein attached to proteins as an intracellular targeting signal).. Its function is as follows. Deubiquitinase that specifically cleaves 'Lys-63'- and linear 'Met-1'-linked polyubiquitin chains and is involved in NF-kappa-B activation and TNF-alpha-induced necroptosis. Negatively regulates NF-kappa-B activation by deubiquitinating upstream signaling factors. Contributes to the regulation of cell survival, proliferation and differentiation via its effects on NF-kappa-B activation. Negative regulator of Wnt signaling. Inhibits HDAC6 and thereby promotes acetylation of alpha-tubulin and stabilization of microtubules. Plays a role in the regulation of microtubule dynamics, and thereby contributes to the regulation of cell proliferation, cell polarization, cell migration, and angiogenesis. Required for normal cell cycle progress and normal cytokinesis. Inhibits nuclear translocation of NF-kappa-B. Plays a role in the regulation of inflammation and the innate immune response, via its effects on NF-kappa-B activation. Dispensable for the maturation of intrathymic natural killer cells, but required for the continued survival of immature natural killer cells. Negatively regulates TNFRSF11A signaling and osteoclastogenesis. Involved in the regulation of ciliogenesis, allowing ciliary basal bodies to migrate and dock to the plasma membrane; this process does not depend on NF-kappa-B activation. Ability to remove linear ('Met-1'-linked) polyubiquitin chains regulates innate immunity and TNF-alpha-induced necroptosis: recruited to the LUBAC complex via interaction with SPATA2 and restricts linear polyubiquitin formation on target proteins. Regulates innate immunity by restricting linear polyubiquitin formation on RIPK2 in response to NOD2 stimulation. Involved in TNF-alpha-induced necroptosis by removing linear ('Met-1'-linked) polyubiquitin chains from RIPK1, thereby regulating the kinase activity of RIPK1. Negatively regulates intestinal inflammation by removing 'Lys-63' linked polyubiquitin chain of NLRP6, thereby reducing the interaction between NLRP6 and PYCARD/ASC and formation of the NLRP6 inflammasome. Does not catalyze deubiquitination of heterotypic 'Lys-63'-/'Lys-48'-linked branched ubiquitin chains. Removes 'Lys-63' linked polyubiquitin chain of MAP3K7, which inhibits phosphorylation and blocks downstream activation of the JNK-p38 kinase cascades. Also removes 'Lys-63'-linked polyubiquitin chains of MAP3K1 and MA3P3K3, which inhibit their interaction with MAP2K1 and MAP2K2. This chain is Ubiquitin carboxyl-terminal hydrolase CYLD (Cyld), found in Mus musculus (Mouse).